The sequence spans 352 residues: Uroporphyrinogen decarboxylase (352 aa).

Substrate is bound by residues Arg26–Arg30, Asp76, Tyr153, Ser208, and His323.

The protein belongs to the uroporphyrinogen decarboxylase family. Homodimer.

It localises to the cytoplasm. It catalyses the reaction uroporphyrinogen III + 4 H(+) = coproporphyrinogen III + 4 CO2. It participates in porphyrin-containing compound metabolism; protoporphyrin-IX biosynthesis; coproporphyrinogen-III from 5-aminolevulinate: step 4/4. In terms of biological role, catalyzes the decarboxylation of four acetate groups of uroporphyrinogen-III to yield coproporphyrinogen-III. This Prochlorococcus marinus (strain NATL2A) protein is Uroporphyrinogen decarboxylase.